The primary structure comprises 217 residues: UPF0711 protein C18orf21 homolog (217 aa).

A Phosphoserine modification is found at serine 126. Phosphothreonine is present on residues threonine 130 and threonine 139. The disordered stretch occupies residues 131–190 (AANKASPKTPKRTAPGSANLGQSTNGSKGKSPSLTIRTPTSGQSTPICSSRNGSKRKKHF). The segment covering 149–182 (NLGQSTNGSKGKSPSLTIRTPTSGQSTPICSSRN) has biased composition (polar residues).

Belongs to the UPF0711 family.

This chain is UPF0711 protein C18orf21 homolog, found in Mus musculus (Mouse).